Here is a 305-residue protein sequence, read N- to C-terminus: Alpha-N-acetylgalactosaminide alpha-2,6-sialyltransferase 3 (305 aa).

The Cytoplasmic segment spans residues 1-8 (MACILKRK). Residues 9–28 (SVIAVSFIAAFLFLLVVRLV) traverse the membrane as a helical; Signal-anchor for type II membrane protein segment. Over 29-305 (NEVNFPLLLN…IFTHPNWTLS (277 aa)) the chain is Lumenal. A disulfide bridge links C80 with C229. N-linked (GlcNAc...) asparagine glycosylation is found at N148, N239, and N301.

It belongs to the glycosyltransferase 29 family. As to expression, expressed in brain and kidney. Observed in the epithelium of the proximal tubules, marginal expression was also found in the distal tubules and collecting tubules.

The protein resides in the golgi apparatus membrane. The catalysed reaction is an alpha-Neu5Ac-(2-&gt;3)-beta-D-Gal-(1-&gt;3)-D-GlcNAc derivative + CMP-N-acetyl-beta-neuraminate = an alpha-Neu5Ac-(2-&gt;3)-beta-D-Gal-(1-&gt;3)-[alpha-Neu5Ac-(2-&gt;6)]-D-GlcNAc derivative + CMP + H(+). The enzyme catalyses a ganglioside GM1b (d18:1(4E)) + CMP-N-acetyl-beta-neuraminate = a ganglioside GD1alpha (d18:1(4E)) + CMP + H(+). It carries out the reaction a globoside MSGG + CMP-N-acetyl-beta-neuraminate = a globoside DSGG + CMP + H(+). It catalyses the reaction 3-O-[alpha-Neu5Ac-(2-&gt;3)-beta-D-Gal-(1-&gt;3)-alpha-D-GalNAc]-L-Ser-[protein] + CMP-N-acetyl-beta-neuraminate = a 3-O-{alpha-Neu5Ac-(2-&gt;3)-beta-D-Gal-(1-&gt;3)-[alpha-Neu5Ac-(2-&gt;6)]-alpha-D-GalNAc}-L-seryl-[protein] + CMP + H(+). The catalysed reaction is 3-O-[alpha-Neu5Ac-(2-&gt;3)-beta-D-Gal-(1-&gt;3)-alpha-D-GalNAc]-L-Thr-[protein] + CMP-N-acetyl-beta-neuraminate = a 3-O-{alpha-Neu5Ac-(2-&gt;3)-beta-D-Gal-(1-&gt;3)-[alpha-Neu5Ac-(2-&gt;6)]-alpha-D-GalNAc}-L-threonyl-[protein] + CMP + H(+). It participates in protein modification; protein glycosylation. Its pathway is glycolipid biosynthesis. Functionally, transfers the sialyl group (N-acetyl-alpha-neuraminyl or NeuAc) from CMP-NeuAc to the GalNAc residue on the NeuAc-alpha-2,3-Gal-beta-1,3-GalNAc sequence of glycoproteins and glycolipids forming an alpha-2,6-linkage. Produces branched type disialyl structures by transfer of a sialyl group onto a GalNAc residue inside the backbone core chains. ST6GalNAcIII prefers glycolipids to glycoproteins, predominantly catalyzing the biosynthesis of ganglioside GD1alpha from GM1b. GD1alpha is a critical molecule in the communication and interaction between neuronal cells and their supportive cells, particularly in brain tissues, and functions as an adhesion molecule in the process of metastasis. Sialylation of glycoproteins or glycosphingolipids is very important in tumor development, neuronal development, nerve repair, immunological processes and regulation of hormone sensitivity. The sequence is that of Alpha-N-acetylgalactosaminide alpha-2,6-sialyltransferase 3 (ST6GALNAC3) from Homo sapiens (Human).